The primary structure comprises 135 residues: Retinol-binding protein 1 (135 aa).

Residues 22–32 (RALDVNVALRK) are important for interaction with STRA6. Lys-41, Met-63, and Gln-109 together coordinate all-trans-retinol.

This sequence belongs to the calycin superfamily. Fatty-acid binding protein (FABP) family. In terms of assembly, interacts (only as retinol-free apoprotein) with STRA6.

It is found in the cytoplasm. The protein resides in the lipid droplet. Functionally, cytoplasmic retinol-binding protein. Accepts retinol from the transport protein STRA6, and thereby contributes to retinol uptake, storage and retinoid homeostasis. This chain is Retinol-binding protein 1 (Rbp1), found in Rattus norvegicus (Rat).